The following is a 124-amino-acid chain: Ribosome-binding factor A (124 aa).

Belongs to the RbfA family. As to quaternary structure, monomer. Binds 30S ribosomal subunits, but not 50S ribosomal subunits or 70S ribosomes.

The protein localises to the cytoplasm. One of several proteins that assist in the late maturation steps of the functional core of the 30S ribosomal subunit. Associates with free 30S ribosomal subunits (but not with 30S subunits that are part of 70S ribosomes or polysomes). Required for efficient processing of 16S rRNA. May interact with the 5'-terminal helix region of 16S rRNA. The protein is Ribosome-binding factor A of Sorangium cellulosum (strain So ce56) (Polyangium cellulosum (strain So ce56)).